A 203-amino-acid polypeptide reads, in one-letter code: Large ribosomal subunit protein uL13 (203 aa).

Residue A2 is modified to N-acetylalanine. At R59 the chain carries Citrulline. Position 77 is a phosphoserine (S77). R140 carries the post-translational modification Citrulline. At K191 the chain carries N6-acetyllysine.

The protein belongs to the universal ribosomal protein uL13 family. Component of the 60S ribosome. Component of the GAIT complex. Interacts with EIF4G1. In terms of processing, phosphorylation at Ser-77 upon interferon-gamma treatment in macrophages involves a DAPK1-DAPK3 kinase cascade and is causing release from the ribosome, association with the GAIT complex and subsequent involvement in transcript-selective translation inhibition. Citrullinated by PADI4.

The protein resides in the cytoplasm. Functionally, associated with ribosomes but is not required for canonical ribosome function and has extra-ribosomal functions. Component of the GAIT (gamma interferon-activated inhibitor of translation) complex which mediates interferon-gamma-induced transcript-selective translation inhibition in inflammation processes. Upon interferon-gamma activation and subsequent phosphorylation dissociates from the ribosome and assembles into the GAIT complex which binds to stem loop-containing GAIT elements in the 3'-UTR of diverse inflammatory mRNAs (such as ceruplasmin) and suppresses their translation. In the GAIT complex interacts with m7G cap-bound eIF4G at or near the eIF3-binding site and blocks the recruitment of the 43S ribosomal complex. Involved in methylation of rRNA. The polypeptide is Large ribosomal subunit protein uL13 (Rpl13a) (Rattus norvegicus (Rat)).